The following is an 89-amino-acid chain: Small ribosomal subunit protein uS19 (89 aa).

Belongs to the universal ribosomal protein uS19 family.

Protein S19 forms a complex with S13 that binds strongly to the 16S ribosomal RNA. This is Small ribosomal subunit protein uS19 from Porphyromonas gingivalis (strain ATCC 33277 / DSM 20709 / CIP 103683 / JCM 12257 / NCTC 11834 / 2561).